Consider the following 436-residue polypeptide: Gamma-glutamyl phosphate reductase (436 aa).

This sequence belongs to the gamma-glutamyl phosphate reductase family.

Its subcellular location is the cytoplasm. It catalyses the reaction L-glutamate 5-semialdehyde + phosphate + NADP(+) = L-glutamyl 5-phosphate + NADPH + H(+). It participates in amino-acid biosynthesis; L-proline biosynthesis; L-glutamate 5-semialdehyde from L-glutamate: step 2/2. Catalyzes the NADPH-dependent reduction of L-glutamate 5-phosphate into L-glutamate 5-semialdehyde and phosphate. The product spontaneously undergoes cyclization to form 1-pyrroline-5-carboxylate. The polypeptide is Gamma-glutamyl phosphate reductase (Salinibacter ruber (strain DSM 13855 / M31)).